A 156-amino-acid polypeptide reads, in one-letter code: Putative pre-16S rRNA nuclease (156 aa).

This sequence belongs to the YqgF nuclease family.

The protein localises to the cytoplasm. Functionally, could be a nuclease involved in processing of the 5'-end of pre-16S rRNA. This is Putative pre-16S rRNA nuclease from Ehrlichia ruminantium (strain Welgevonden).